Here is a 177-residue protein sequence, read N- to C-terminus: Large ribosomal subunit protein eL20 (177 aa).

The protein belongs to the eukaryotic ribosomal protein eL20 family.

The sequence is that of Large ribosomal subunit protein eL20 (RpL18A) from Spodoptera frugiperda (Fall armyworm).